The following is a 418-amino-acid chain: NAQSHDNVVSIMLDTKGPEVRSGDVPQPMLKEGQEFNPTIRRGVSTQDTVSVNYDDFVNDVVVGDILLVDGGMMSLAVKSKTSDLVKCVVVDGGELKSRRHLNVRGKSARLPSITDKDWGDIKFGVDNQVDFYAVSFVKDAKVVHELKEYLKRCNADIHVIVKIESADSIPNLHSIISASDGAMVARGDLGAELPIEEVPLLQEDIIRRCHSMQKPVIVATNMLESMINHPTPTRAEVSDIAIAVREGADAVMLSGETAHGKYPLKAVRVMHTVALRTESSSPVNTTPPAQGAYKGHMGEMFAFHATIMANTLNTPIIVFTRTGSMAVLLSHYQPASTIFAFTNEERIKQRLSLYRGVMPIYMEFSSDAEETFSRALQLLLNKGLLVEGEHVTLVQSGAQPIWRQESTHHIQVRKVQN.

K(+) is bound by residues Asp14 and Thr15. Arg21 contributes to the ATP binding site. Glu165 contributes to the Mg(2+) binding site. Residues Gly188, Asp189, and Thr221 each coordinate substrate. Asp189 contacts Mg(2+).

The protein belongs to the pyruvate kinase family. Mg(2+) serves as cofactor. The cofactor is K(+). Expressed in developing and germinating endosperm and in roots.

It is found in the plastid. The protein resides in the chloroplast. The catalysed reaction is pyruvate + ATP = phosphoenolpyruvate + ADP + H(+). It participates in carbohydrate degradation; glycolysis; pyruvate from D-glyceraldehyde 3-phosphate: step 5/5. The polypeptide is Pyruvate kinase isozyme G, chloroplastic (Ricinus communis (Castor bean)).